Consider the following 457-residue polypeptide: G-protein coupled receptor 135 (457 aa).

Residues 1-26 (MEEQARPPGRPAASATLQGSAHPGGA) are disordered. Residues 1–64 (MEEQARPPGR…EAAGSRGPAP (64 aa)) are Extracellular-facing. A glycan (N-linked (GlcNAc...) asparagine) is linked at Asn-47. A helical membrane pass occupies residues 65–85 (LLWHGAAVAAQALVLLLIFLL). Over 86-109 (SSLGNCAVMGVIVKHRQLRTVTNA) the chain is Cytoplasmic. A helical membrane pass occupies residues 110–130 (FILSLSLSDLLTALLCLPAAF). Residues 131-156 (LDLFAPPGDSGPWRSFCAASRFFSSC) lie on the Extracellular side of the membrane. The helical transmembrane segment at 157–177 (FGIVSTFSVALISLDRYCAIV) threads the bilayer. At 178-189 (RPPRDKLGRRRA) the chain is on the cytoplasmic side. A helical membrane pass occupies residues 190–210 (LQLLAGAWLAALGFSLPWDLL). Residues 211-235 (RAPREPPAPQSFHRCLYRTSPDPAQ) are Extracellular-facing. A helical membrane pass occupies residues 236 to 256 (LGVAYSVGLVVACYLLPFLLM). At 257–295 (CFCRYHICKTVRLSDVRVRPMTTYARVLRFFSEVRTATT) the chain is on the cytoplasmic side. Residues 296–316 (VLIMIIFVMCCWGPYCFLVLL) form a helical membrane-spanning segment. Over 317–329 (AATRQGQATQAPS) the chain is Extracellular. A helical membrane pass occupies residues 330–350 (LLNVAAVWLTWANGAINPVIY). Topologically, residues 351–457 (AIRNPNISML…HNSETRDSSI (107 aa)) are cytoplasmic.

The protein belongs to the G-protein coupled receptor 1 family. As to quaternary structure, interacts with MTNR1B. Interacts with ARRB1 and ARRB2 in a spontaneous and agonist-independent manner; leading to the internalization of GPR135 in the endosomal compartment.

The protein resides in the cell membrane. The protein localises to the endosome membrane. Its function is as follows. Orphan receptor. Has spontaneous activity for beta-arrestin recruitment. Shows a reciprocal regulatory interaction with the melatonin receptor MTNR1B most likely through receptor heteromerization. This Mus musculus (Mouse) protein is G-protein coupled receptor 135 (Gpr135).